A 313-amino-acid polypeptide reads, in one-letter code: Malate dehydrogenase (313 aa).

Residues 11 to 16 (GAGSIG) and Asp35 each bind NAD(+). Residues Arg84 and Arg90 each contribute to the substrate site. Residues Asn97 and 120–122 (VTN) contribute to the NAD(+) site. Positions 122 and 153 each coordinate substrate. His177 functions as the Proton acceptor in the catalytic mechanism.

The protein belongs to the LDH/MDH superfamily. MDH type 3 family.

The catalysed reaction is (S)-malate + NAD(+) = oxaloacetate + NADH + H(+). Its function is as follows. Catalyzes the reversible oxidation of malate to oxaloacetate. The chain is Malate dehydrogenase from Ehrlichia chaffeensis (strain ATCC CRL-10679 / Arkansas).